Consider the following 444-residue polypeptide: Probable glycine dehydrogenase (decarboxylating) subunit 1 (444 aa).

Belongs to the GcvP family. N-terminal subunit subfamily. As to quaternary structure, the glycine cleavage system is composed of four proteins: P, T, L and H. In this organism, the P 'protein' is a heterodimer of two subunits.

The enzyme catalyses N(6)-[(R)-lipoyl]-L-lysyl-[glycine-cleavage complex H protein] + glycine + H(+) = N(6)-[(R)-S(8)-aminomethyldihydrolipoyl]-L-lysyl-[glycine-cleavage complex H protein] + CO2. In terms of biological role, the glycine cleavage system catalyzes the degradation of glycine. The P protein binds the alpha-amino group of glycine through its pyridoxal phosphate cofactor; CO(2) is released and the remaining methylamine moiety is then transferred to the lipoamide cofactor of the H protein. This Chlorobium luteolum (strain DSM 273 / BCRC 81028 / 2530) (Pelodictyon luteolum) protein is Probable glycine dehydrogenase (decarboxylating) subunit 1.